Here is a 1978-residue protein sequence, read N- to C-terminus: Sodium channel protein type 8 subunit alpha (1978 aa).

2 disordered regions span residues 1–20 (MAAR…FTPE) and 28–62 (RIAE…LEAG). Topologically, residues 1-132 (MAARLLAPPG…RIAIKILIHS (132 aa)) are cytoplasmic. A compositionally biased stretch (basic and acidic residues) spans 28–61 (RIAESKLKKPPKADGSHREDDEDSKPKPNSDLEA). The I repeat unit spans residues 114–442 (ILSPFNLIRR…KAMLEQLKKQ (329 aa)). A helical membrane pass occupies residues 133–151 (VFSMIIMCTILTNCVFMTF). Residues 152–158 (SNPPEWS) lie on the Extracellular side of the membrane. Residues 159–179 (KNVEYTFTGIYTFESLVKIIA) traverse the membrane as a helical segment. At 180–193 (RGFCIDGFTFLRDP) the chain is on the cytoplasmic side. Residues 194 to 211 (WNWLDFSVIMMAYVTEFV) traverse the membrane as a helical segment. The Extracellular portion of the chain corresponds to 212–217 (DLGNVS). N-linked (GlcNAc...) asparagine glycosylation occurs at N215. Residues 218–234 (ALRTFRVLRALKTISVI) traverse the membrane as a helical segment. At 235–253 (PGLKTIVGALIQSVKKLSD) the chain is on the cytoplasmic side. A helical transmembrane segment spans residues 254–273 (VMILTVFCLSVFALIGLQLF). Over 274–355 (MGNLRNKCVV…PNYGYTSFDT (82 aa)) the chain is Extracellular. C281 and C333 form a disulfide bridge. 4 N-linked (GlcNAc...) asparagine glycosylation sites follow: N289, N295, N308, and N326. The pore-forming intramembrane region spans 356-380 (FSWAFLALFRLMTQDYWENLYQLTL). A Na(+)-binding site is contributed by E373. Over 381–387 (RAAGKTY) the chain is Extracellular. The helical transmembrane segment at 388–408 (MIFFVLVIFVGSFYLVNLILA) threads the bilayer. The Cytoplasmic portion of the chain corresponds to 409–751 (VVAMAYEEQN…EIVNLIVMDP (343 aa)). Disordered regions lie at residues 446–530 (AQAA…KAFR) and 576–597 (DPGS…SEGR). The segment covering 473 to 486 (SPRSSSELSKLSSK) has biased composition (low complexity). Positions 489–500 (KERRNRRKKRKQ) are enriched in basic residues. 2 stretches are compositionally biased toward basic and acidic residues: residues 501–530 (KELS…KAFR) and 586–597 (DEHSTVEESEGR). 2 positions are modified to phosphoserine: S518 and S520. The II repeat unit spans residues 733-1005 (CHPYWIKLKE…QISVIRIKKG (273 aa)). The chain crosses the membrane as a helical span at residues 752–770 (FVDLAITICIVLNTLFMAM). Topologically, residues 771–781 (EHHPMTPQFEH) are extracellular. Residues 782–801 (VLAVGNLVFTGIFTAEMFLK) traverse the membrane as a helical segment. The Cytoplasmic portion of the chain corresponds to 802 to 815 (LIAMDPYYYFQEGW). Residues 816-835 (NIFDGFIVSLSLMELSLADV) form a helical membrane-spanning segment. Residues 836–837 (EG) lie on the Extracellular side of the membrane. The chain crosses the membrane as a helical span at residues 838 to 855 (LSVLRSFRLLRVFKLAKS). Residues 856 to 871 (WPTLNMLIKIIGNSVG) are Cytoplasmic-facing. Residues 872–890 (ALGNLTLVLAIIVFIFAVV) form a helical membrane-spanning segment. Residues 891 to 919 (GMQLFGKSYKECVCKINQECKLPRWHMND) are Extracellular-facing. Cysteines 904 and 910 form a disulfide. Residues 920-940 (FFHSFLIVFRVLCGEWIETMW) constitute an intramembrane region (pore-forming). The Na(+) site is built by E934 and E937. Residues 941 to 953 (DCMEVAGQAMCLI) are Extracellular-facing. Cysteines 942 and 951 form a disulfide. Residues 954–974 (VFMMVMVIGNLVVLNLFLALL) traverse the membrane as a helical segment. The Cytoplasmic portion of the chain corresponds to 975 to 1197 (LSSFSADNLA…TCFLIVEHNW (223 aa)). Residues 1105–1146 (NLNTEDVSSESDPEGSKDKLDDTSSSEGSTIDIKPEVEEVPV) form a disordered region. One copy of the III repeat lies at 1178-1493 (LGKSWWILRK…KKYYNAMKKL (316 aa)). A helical membrane pass occupies residues 1198 to 1215 (FETFIIFMILLSSGALAF). The Extracellular portion of the chain corresponds to 1216-1228 (EDIYIEQRKTIRT). The chain crosses the membrane as a helical span at residues 1229 to 1247 (ILEYADKVFTYIFILEMLL). The Cytoplasmic segment spans residues 1248–1261 (KWTAYGFVKFFTNA). The helical transmembrane segment at 1262 to 1280 (WCWLDFLIVAVSLVSLIAN) threads the bilayer. Residues 1281 to 1288 (ALGYSELG) lie on the Extracellular side of the membrane. A helical transmembrane segment spans residues 1289 to 1307 (AIKSLRTLRALRPLRALSR). Topologically, residues 1308 to 1324 (FEGMRVVVNALVGAIPS) are cytoplasmic. Residues 1325–1344 (IMNVLLVCLIFWLIFSIMGV) form a helical membrane-spanning segment. The Extracellular segment spans residues 1345–1397 (NLFAGKYHYCFNETSEIRFEIDIVNNKTDCEKLMEGNSTEIRWKNVKINFDNV). C1354 and C1374 are oxidised to a cystine. 3 N-linked (GlcNAc...) asparagine glycosylation sites follow: N1356, N1370, and N1381. Residues 1398–1419 (GAGYLALLQVATFKGWMDIMYA) constitute an intramembrane region (pore-forming). Over 1420–1436 (AVDSRKPDEQPDYEGNI) the chain is Extracellular. A helical membrane pass occupies residues 1437-1458 (YMYIYFVIFIIFGSFFTLNLFI). Over 1459-1521 (GVIIDNFNQQ…IVFDFVTQQA (63 aa)) the chain is Cytoplasmic. At S1495 the chain carries Phosphoserine; by PKC. The stretch at 1502–1799 (IPRPLNKIQG…WEKFDPDATQ (298 aa)) is one IV repeat. The helical transmembrane segment at 1522-1539 (FDIVIMMLICLNMVTMMV) threads the bilayer. Residues 1540-1550 (ETDTQSKQMEN) lie on the Extracellular side of the membrane. A helical transmembrane segment spans residues 1551–1569 (ILYWINLVFVIFFTCECVL). At 1570–1581 (KMFALRHYYFTI) the chain is on the cytoplasmic side. Residues 1582–1599 (GWNIFDFVVVILSIVGMF) form a helical membrane-spanning segment. Residues 1600–1612 (LADIIEKYFVSPT) are Extracellular-facing. The chain crosses the membrane as a helical span at residues 1613 to 1629 (LFRVIRLARIGRILRLI). Residues 1630–1648 (KGAKGIRTLLFALMMSLPA) lie on the Cytoplasmic side of the membrane. A helical membrane pass occupies residues 1649-1666 (LFNIGLLLFLVMFIFSIF). The Extracellular portion of the chain corresponds to 1667-1688 (GMSNFAYVKHEAGIDDMFNFET). Positions 1689–1711 (FGNSMICLFQITTSAGWDGLLLP) form an intramembrane region, pore-forming. Topologically, residues 1712-1740 (ILNRPPDCSLDKEHPGSGFKGDCGNPSVG) are extracellular. Cysteines 1719 and 1734 form a disulfide. The chain crosses the membrane as a helical span at residues 1741–1763 (IFFFVSYIIISFLIVVNMYIAII). Over 1764–1978 (LENFSVATEE…RQKEVRESKC (215 aa)) the chain is Cytoplasmic. The IQ domain maps to 1893–1922 (EEVSAVVLQRAYRGHLARRGFICRKMASNK). A disordered region spans residues 1923 to 1978 (LENGGTHRDKKESTPSTASLPSYDSVTKPDKEKQQRAEEGRRERAKRQKEVRESKC). A compositionally biased stretch (polar residues) spans 1936–1947 (TPSTASLPSYDS). Residues 1949–1978 (TKPDKEKQQRAEEGRRERAKRQKEVRESKC) show a composition bias toward basic and acidic residues.

This sequence belongs to the sodium channel (TC 1.A.1.10) family. Nav1.6/SCN8A subfamily. The voltage-sensitive sodium channel consists of an ion-conducting pore-forming alpha subunit regulated by one or more beta-1 (SCN1B), beta-2 (SCN2B), beta-3 (SCN3B) and/or beta-4 (SCN4B) subunits. Beta-1 (SCN1B) and beta-3 (SCN3B) are non-covalently associated with alpha, while beta-2 (SCN2B) and beta-4 (SCN4B) are covalently linked by disulfide bonds. Interacts with NEDD4 and NEDD4L. Interacts with FGF13. Interacts with FGF14, GBG3, GBB2 and SCN1B. Interacts with TMEM233. Interacts with the conotoxin GVIIJ. Interacts with CALM1; the interaction modulates the inactivation rate of SCN8A. May be ubiquitinated by NEDD4L; which would promote its endocytosis. Post-translationally, phosphorylation at Ser-1495 by PKC in a highly conserved cytoplasmic loop slows inactivation of the sodium channel and reduces peak sodium currents. In terms of tissue distribution, isoform 1 is highly expressed in brain, moderately in spinal cord, and at low levels in dorsal root ganglia, nodose ganglia and superior cervical ganglia. Not detected in sciatic nerve and non-neuronal tissues. Isoform 2 is hardly detectable, if at all, in brain, expressed at low levels in spinal cord and at highest levels in dorsal root ganglia.

It localises to the cell membrane. Its subcellular location is the cell projection. It is found in the axon. It catalyses the reaction Na(+)(in) = Na(+)(out). Its function is as follows. Pore-forming subunit of a voltage-gated sodium channel complex assuming opened or closed conformations in response to the voltage difference across membranes and through which sodium ions selectively pass along their electrochemical gradient. Contributes to neuronal excitability by regulating action potential threshold and propagation. In Rattus norvegicus (Rat), this protein is Sodium channel protein type 8 subunit alpha.